The sequence spans 126 residues: UPF0538 protein C2orf76 homolog (126 aa).

The protein belongs to the UPF0538 family.

This Pongo abelii (Sumatran orangutan) protein is UPF0538 protein C2orf76 homolog.